Reading from the N-terminus, the 490-residue chain is Glutamyl-tRNA(Gln) amidotransferase subunit A (490 aa).

Residues lysine 79 and serine 154 each act as charge relay system in the active site. The Acyl-ester intermediate role is filled by serine 178.

This sequence belongs to the amidase family. GatA subfamily. Heterotrimer of A, B and C subunits.

The catalysed reaction is L-glutamyl-tRNA(Gln) + L-glutamine + ATP + H2O = L-glutaminyl-tRNA(Gln) + L-glutamate + ADP + phosphate + H(+). In terms of biological role, allows the formation of correctly charged Gln-tRNA(Gln) through the transamidation of misacylated Glu-tRNA(Gln) in organisms which lack glutaminyl-tRNA synthetase. The reaction takes place in the presence of glutamine and ATP through an activated gamma-phospho-Glu-tRNA(Gln). This chain is Glutamyl-tRNA(Gln) amidotransferase subunit A, found in Roseiflexus castenholzii (strain DSM 13941 / HLO8).